The chain runs to 317 residues: Melanocyte-stimulating hormone receptor (317 aa).

Residues 1 to 37 (MPVQGSQRRLLGSLNSTPTATPKLGLAANQTGAQCLE) are Extracellular-facing. N-linked (GlcNAc...) asparagine glycosylation occurs at Asn29. A helical transmembrane segment spans residues 38–63 (VSIPDGLFLSLGLVSLVENVLVVAAI). At 64-72 (ARNRNLHSP) the chain is on the cytoplasmic side. A helical membrane pass occupies residues 73–93 (MYCFICCLALSDLLVSGSNML). The Extracellular portion of the chain corresponds to 94 to 118 (ETAVILLLEAGALAARAAVVQQLDN). A helical transmembrane segment spans residues 119 to 140 (VIDVITCSSMLSSLCFLGAIAM). The Cytoplasmic portion of the chain corresponds to 141–163 (DRYISIFYALRYHSIVTLPRARG). Residues 164–183 (VVAAIWVASILFSTLFIAYY) traverse the membrane as a helical segment. The Extracellular portion of the chain corresponds to 184 to 191 (DHVAVLLC). A helical transmembrane segment spans residues 192–211 (LVVFFLAMLVLMAVLYVHML). Residues 212 to 240 (ARACQHAQGIAQLHKRQRPAHQGVGLKGA) are Cytoplasmic-facing. A helical membrane pass occupies residues 241–266 (ATLTILLGIFFLCWGPFFLHLTLIVL). Residues 267-279 (CPQHPTCSCIFKN) lie on the Extracellular side of the membrane. Residues 280-300 (FNLFLALIICNAIIDPLIYAF) form a helical membrane-spanning segment. Residues 301–317 (RSQELRRTLKKVLLCSW) are Cytoplasmic-facing. Cys315 carries the S-palmitoyl cysteine lipid modification.

This sequence belongs to the G-protein coupled receptor 1 family. In terms of assembly, interacts with MGRN1, but does not undergo MGRN1-mediated ubiquitination; this interaction competes with GNAS-binding and thus inhibits agonist-induced cAMP production. Interacts with OPN3; the interaction results in a decrease in MC1R-mediated cAMP signaling and ultimately a decrease in melanin production in melanocytes.

The protein localises to the cell membrane. Functionally, receptor for MSH (alpha, beta and gamma) and ACTH. The activity of this receptor is mediated by G proteins which activate adenylate cyclase. Mediates melanogenesis, the production of eumelanin (black/brown) and phaeomelanin (red/yellow), via regulation of cAMP signaling in melanocytes. The chain is Melanocyte-stimulating hormone receptor (MC1R) from Presbytis comata (Grizzled leaf monkey).